A 217-amino-acid chain; its full sequence is Adapter protein MecA (217 aa).

The protein belongs to the MecA family. In terms of assembly, homodimer.

Its function is as follows. Enables the recognition and targeting of unfolded and aggregated proteins to the ClpC protease or to other proteins involved in proteolysis. In Listeria welshimeri serovar 6b (strain ATCC 35897 / DSM 20650 / CCUG 15529 / CIP 8149 / NCTC 11857 / SLCC 5334 / V8), this protein is Adapter protein MecA.